The chain runs to 882 residues: Translation initiation factor IF-2 (882 aa).

The disordered stretch occupies residues 50–299; it reads SFKSANTTKP…KERPLPETLV (250 aa). Composition is skewed to basic and acidic residues over residues 60–71 and 84–96; these read STEKDSKNSSRK and RRRDNKNDHDNRH. Residues 97–108 are compositionally biased toward basic residues; sequence GNNKRRNNKFKK. Basic and acidic residues-rich tracts occupy residues 109-133, 169-183, 232-242, and 250-263; these read QQNDRRAERNKPQTEAKSAARDLLN, KKVENTRKPKEEKLE, QKEETKPTRKK, and EVPDYERERSEHSD. A compositionally biased stretch (basic residues) spans 264–277; it reads KARRRRNKKNKRIN. Basic and acidic residues predominate over residues 278-294; it reads QSKEIKKQPTQRKERPL. The 170-residue stretch at 383–552 folds into the tr-type G domain; that stretch reads KRPPVVTIMG…LLQADVMELK (170 aa). A G1 region spans residues 392–399; that stretch reads GHVDHGKT. 392 to 399 lines the GTP pocket; it reads GHVDHGKT. The interval 417–421 is G2; the sequence is GITQK. Positions 438–441 are G3; that stretch reads DTPG. GTP-binding positions include 438–442 and 492–495; these read DTPGH and NKID. The segment at 492 to 495 is G4; the sequence is NKID. Residues 528-530 form a G5 region; that stretch reads SAK.

It belongs to the TRAFAC class translation factor GTPase superfamily. Classic translation factor GTPase family. IF-2 subfamily.

It is found in the cytoplasm. Its function is as follows. One of the essential components for the initiation of protein synthesis. Protects formylmethionyl-tRNA from spontaneous hydrolysis and promotes its binding to the 30S ribosomal subunits. Also involved in the hydrolysis of GTP during the formation of the 70S ribosomal complex. The chain is Translation initiation factor IF-2 from Lactobacillus gasseri (strain ATCC 33323 / DSM 20243 / BCRC 14619 / CIP 102991 / JCM 1131 / KCTC 3163 / NCIMB 11718 / NCTC 13722 / AM63).